The chain runs to 358 residues: Histidinol-phosphate aminotransferase (358 aa).

Lys218 is modified (N6-(pyridoxal phosphate)lysine).

Belongs to the class-II pyridoxal-phosphate-dependent aminotransferase family. Histidinol-phosphate aminotransferase subfamily. Homodimer. The cofactor is pyridoxal 5'-phosphate.

The enzyme catalyses L-histidinol phosphate + 2-oxoglutarate = 3-(imidazol-4-yl)-2-oxopropyl phosphate + L-glutamate. It functions in the pathway amino-acid biosynthesis; L-histidine biosynthesis; L-histidine from 5-phospho-alpha-D-ribose 1-diphosphate: step 7/9. The polypeptide is Histidinol-phosphate aminotransferase (Dehalococcoides mccartyi (strain ATCC BAA-2100 / JCM 16839 / KCTC 5957 / BAV1)).